Reading from the N-terminus, the 143-residue chain is Nucleoside diphosphate kinase (143 aa).

K11, F59, R87, T93, R104, and N114 together coordinate ATP. H117 (pros-phosphohistidine intermediate) is an active-site residue.

The protein belongs to the NDK family. Homotetramer. The cofactor is Mg(2+).

The protein localises to the cytoplasm. It carries out the reaction a 2'-deoxyribonucleoside 5'-diphosphate + ATP = a 2'-deoxyribonucleoside 5'-triphosphate + ADP. It catalyses the reaction a ribonucleoside 5'-diphosphate + ATP = a ribonucleoside 5'-triphosphate + ADP. Major role in the synthesis of nucleoside triphosphates other than ATP. The ATP gamma phosphate is transferred to the NDP beta phosphate via a ping-pong mechanism, using a phosphorylated active-site intermediate. This is Nucleoside diphosphate kinase from Shewanella oneidensis (strain ATCC 700550 / JCM 31522 / CIP 106686 / LMG 19005 / NCIMB 14063 / MR-1).